A 492-amino-acid polypeptide reads, in one-letter code: Asparagine--tRNA ligase, mitochondrial (492 aa).

It belongs to the class-II aminoacyl-tRNA synthetase family.

Its subcellular location is the mitochondrion matrix. The catalysed reaction is tRNA(Asn) + L-asparagine + ATP = L-asparaginyl-tRNA(Asn) + AMP + diphosphate + H(+). Its function is as follows. Catalyzes the attachment of asparagine to tRNA(Asn) in the mitochondrion. This is Asparagine--tRNA ligase, mitochondrial (SLM5) from Saccharomyces cerevisiae (strain ATCC 204508 / S288c) (Baker's yeast).